The primary structure comprises 144 residues: Mercuric transport protein MerC (144 aa).

Residues 1–21 (MSAITRIIDKIGIVGTIVGSF) lie on the Cytoplasmic side of the membrane. Residues 22–42 (SCAMCFPAAASLGAAIGLGFL) form a helical membrane-spanning segment. Hg(2+) is bound by residues Cys23 and Cys26. Residues 43 to 46 (SQWE) lie on the Periplasmic side of the membrane. A helical membrane pass occupies residues 47-67 (GLFVQWLIPIFASVALLATLA). Topologically, residues 68 to 78 (GWFSHRQWQRT) are cytoplasmic. The chain crosses the membrane as a helical span at residues 79–99 (LLGSIGPVLALVGVFGLTHHF). At 100-103 (LDKD) the chain is on the periplasmic side. The helical transmembrane segment at 104–124 (LARVIFYTGLVVMFLVSIWDM) threads the bilayer. Residues 125 to 144 (VNPANRRCATDGCETPAPRS) lie on the Cytoplasmic side of the membrane.

As to quaternary structure, monomer.

The protein resides in the cell inner membrane. Its activity is regulated as follows. Inhibited by the thiol-modifying reagent N-ethylmaleimide (NEM). In terms of biological role, involved in mercuric ion uptake. The protein is Mercuric transport protein MerC of Acidithiobacillus ferrooxidans (Thiobacillus ferrooxidans).